Reading from the N-terminus, the 399-residue chain is Yellow-related salivary protein M10 (399 aa).

The signal sequence occupies residues 1–18 (MKFILSVLALASFQHVFC). Residues N29 and N83 are each glycosylated (N-linked (GlcNAc...) asparagine).

The protein belongs to the major royal jelly protein family. Salivary gland (at protein level).

The protein resides in the secreted. Probably modulates blood feeding of sand flies on vertebrate species by binding and sequestering different mediators involved in the host response. Functions as a chemoattractant for host neutrophils; likely acts through a G-protein-coupled receptor and effect is dependent on calcium influx and phosphatidylinositol 3-kinases (PI3K) activity. Its function is as follows. (Microbial infection) Probably enhances infection caused by Leishmania species in the host through augmentation of host neutrophil recruitment into the skin. The sequence is that of Yellow-related salivary protein M10 from Phlebotomus duboscqi (Sandfly).